Reading from the N-terminus, the 142-residue chain is ATP synthase epsilon chain (142 aa).

It belongs to the ATPase epsilon chain family. As to quaternary structure, F-type ATPases have 2 components, CF(1) - the catalytic core - and CF(0) - the membrane proton channel. CF(1) has five subunits: alpha(3), beta(3), gamma(1), delta(1), epsilon(1). CF(0) has three main subunits: a, b and c.

The protein localises to the cell inner membrane. In terms of biological role, produces ATP from ADP in the presence of a proton gradient across the membrane. This is ATP synthase epsilon chain from Shewanella halifaxensis (strain HAW-EB4).